A 241-amino-acid chain; its full sequence is Large ribosomal subunit protein eL32 (241 aa).

Residues Met1–Glu16 show a composition bias toward acidic residues. Disordered regions lie at residues Met1–Gln47 and Val68–Gly182. Residues Glu29–Gly44 show a composition bias toward basic and acidic residues. Over residues Val73–Thr96 the composition is skewed to acidic residues. Positions Leu103–Arg116 are enriched in basic and acidic residues. The span at Asp133–Lys159 shows a compositional bias: basic residues.

The protein belongs to the eukaryotic ribosomal protein eL32 family. Part of the 50S ribosomal subunit. Interacts weakly with protein L15.

Functionally, binds to the 23S rRNA. This is Large ribosomal subunit protein eL32 (rpl32e) from Haloarcula marismortui (strain ATCC 43049 / DSM 3752 / JCM 8966 / VKM B-1809) (Halobacterium marismortui).